Here is a 245-residue protein sequence, read N- to C-terminus: Probable phosphatase YcdX (245 aa).

Positions 7, 9, 15, 40, 73, 101, 131, 192, and 194 each coordinate Zn(2+).

Belongs to the PHP family. As to quaternary structure, homotrimer. The cofactor is Zn(2+).

This chain is Probable phosphatase YcdX, found in Escherichia coli O17:K52:H18 (strain UMN026 / ExPEC).